Reading from the N-terminus, the 254-residue chain is UPF0246 protein FTN_1542 (254 aa).

It belongs to the UPF0246 family.

This is UPF0246 protein FTN_1542 from Francisella tularensis subsp. novicida (strain U112).